The chain runs to 206 residues: MSRILLITSSPRSTDSLSTRFAHDLARQLAARDAAGAVTLRDLSNDPLPHIDDAYIVGRMLPSDARSAEQAQAVELAQALVDELRAADIVVIGSAMTNFGPSTQLRAWFDRVIWPQVTFRYGESGVAGTLEGKQVYLVTASGGIFSEGPYAPFDYQSGYLKHLLGFIGMTDIREVRVEGTVLGAEAVQAAIAKAGQELQALVEQAG.

FMN contacts are provided by residues S10 and 16 to 18 (SLS).

This sequence belongs to the azoreductase type 1 family. In terms of assembly, homodimer. FMN serves as cofactor.

The catalysed reaction is 2 a quinone + NADH + H(+) = 2 a 1,4-benzosemiquinone + NAD(+). The enzyme catalyses N,N-dimethyl-1,4-phenylenediamine + anthranilate + 2 NAD(+) = 2-(4-dimethylaminophenyl)diazenylbenzoate + 2 NADH + 2 H(+). Functionally, quinone reductase that provides resistance to thiol-specific stress caused by electrophilic quinones. Also exhibits azoreductase activity. Catalyzes the reductive cleavage of the azo bond in aromatic azo compounds to the corresponding amines. This Burkholderia lata (strain ATCC 17760 / DSM 23089 / LMG 22485 / NCIMB 9086 / R18194 / 383) protein is FMN-dependent NADH:quinone oxidoreductase 1.